We begin with the raw amino-acid sequence, 99 residues long: Cobalt transport protein CbiN (99 aa).

2 helical membrane-spanning segments follow: residues valine 6–leucine 26 and serine 68–tyrosine 88.

The protein belongs to the CbiN family. In terms of assembly, forms an energy-coupling factor (ECF) transporter complex composed of an ATP-binding protein (A component, CbiO), a transmembrane protein (T component, CbiQ) and 2 possible substrate-capture proteins (S components, CbiM and CbiN) of unknown stoichimetry.

Its subcellular location is the cell membrane. It participates in cofactor biosynthesis; adenosylcobalamin biosynthesis. Its function is as follows. Part of the energy-coupling factor (ECF) transporter complex CbiMNOQ involved in cobalt import. The polypeptide is Cobalt transport protein CbiN (Methanococcus vannielii (strain ATCC 35089 / DSM 1224 / JCM 13029 / OCM 148 / SB)).